The chain runs to 137 residues: Ribonuclease VapC51 (137 aa).

Positions 5-120 (YLLDTSVIKR…HYDADFDLIA (116 aa)) constitute a PINc domain. Mg(2+)-binding residues include D8 and D95.

Belongs to the PINc/VapC protein family. It depends on Mg(2+) as a cofactor.

Its function is as follows. Toxic component of a type II toxin-antitoxin (TA) system. An RNase. Its cognate antitoxin is VapB51. The protein is Ribonuclease VapC51 of Mycobacterium tuberculosis (strain ATCC 25618 / H37Rv).